The sequence spans 664 residues: Intraflagellar transport protein 70A2 (664 aa).

TPR repeat units lie at residues 11-44 (DGEF…SPRS), 45-78 (RAGL…HPEL), 153-186 (PDGL…SGYQ), 188-220 (DVSY…GIRQ), 395-423 (QVQE…EKYI), 424-456 (PVLM…CNDH), and 458-491 (VWKL…NYDN). A coiled-coil region spans residues 507 to 534 (YIMTSQNEEAEELMRKIEKEEEQLSYGD). The TPR 8 repeat unit spans residues 543-576 (CIVNLVIGTLYCAKGNYDFGISRVIKSLEPYHKK).

Belongs to the TTC30/dfy-1/fleer family. In terms of assembly, interacts wit the IFT B complex component IFT52.

Its subcellular location is the cell projection. It localises to the cilium. Required for polyglutamylation of axonemal tubulin. Plays a role in anterograde intraflagellar transport (IFT), the process by which cilia precursors are transported from the base of the cilium to the site of their incorporation at the tip. This Rattus norvegicus (Rat) protein is Intraflagellar transport protein 70A2 (Ift70a2).